Reading from the N-terminus, the 256-residue chain is Small ribosomal subunit protein uS3 (256 aa).

Residues 39–111 (IREFLNENFS…EVILNIIEVR (73 aa)) enclose the KH type-2 domain. The segment at 219-256 (DTRKPFEAGNQKRGQKRRPRNDQPGQRPQQRNRNSKED) is disordered. The span at 240 to 250 (DQPGQRPQQRN) shows a compositional bias: low complexity.

Belongs to the universal ribosomal protein uS3 family. In terms of assembly, part of the 30S ribosomal subunit. Forms a tight complex with proteins S10 and S14.

Functionally, binds the lower part of the 30S subunit head. Binds mRNA in the 70S ribosome, positioning it for translation. The polypeptide is Small ribosomal subunit protein uS3 (Acholeplasma laidlawii (strain PG-8A)).